The chain runs to 440 residues: Xylose isomerase (440 aa).

Active-site residues include histidine 100 and aspartate 103. Residues glutamate 231, glutamate 267, histidine 270, aspartate 295, aspartate 306, aspartate 308, and aspartate 338 each coordinate Mg(2+).

This sequence belongs to the xylose isomerase family. Homotetramer. It depends on Mg(2+) as a cofactor.

It is found in the cytoplasm. It catalyses the reaction alpha-D-xylose = alpha-D-xylulofuranose. The polypeptide is Xylose isomerase (Burkholderia multivorans (strain ATCC 17616 / 249)).